The sequence spans 168 residues: Lipoprotein signal peptidase (168 aa).

Helical transmembrane passes span 15-35 (WLWL…VVMD), 47-67 (VLPF…SFLS), 75-95 (WLFT…MSKL), and 107-127 (ALII…GFVV). Active-site residues include aspartate 128 and aspartate 146. A helical transmembrane segment spans residues 141–161 (AFNLADTTICIGAAMIILDGF).

Belongs to the peptidase A8 family.

It localises to the cell inner membrane. The enzyme catalyses Release of signal peptides from bacterial membrane prolipoproteins. Hydrolyzes -Xaa-Yaa-Zaa-|-(S,diacylglyceryl)Cys-, in which Xaa is hydrophobic (preferably Leu), and Yaa (Ala or Ser) and Zaa (Gly or Ala) have small, neutral side chains.. The protein operates within protein modification; lipoprotein biosynthesis (signal peptide cleavage). This protein specifically catalyzes the removal of signal peptides from prolipoproteins. This is Lipoprotein signal peptidase from Vibrio campbellii (strain ATCC BAA-1116).